A 156-amino-acid polypeptide reads, in one-letter code: 6,7-dimethyl-8-ribityllumazine synthase (156 aa).

Residues Phe22, 57–59, and 81–83 contribute to the 5-amino-6-(D-ribitylamino)uracil site; these read AYE and TVI. A (2S)-2-hydroxy-3-oxobutyl phosphate-binding site is contributed by 86-87; it reads GT. His89 serves as the catalytic Proton donor. Residue Phe114 participates in 5-amino-6-(D-ribitylamino)uracil binding. Arg128 is a (2S)-2-hydroxy-3-oxobutyl phosphate binding site.

This sequence belongs to the DMRL synthase family. In terms of assembly, forms an icosahedral capsid composed of 60 subunits, arranged as a dodecamer of pentamers.

The enzyme catalyses (2S)-2-hydroxy-3-oxobutyl phosphate + 5-amino-6-(D-ribitylamino)uracil = 6,7-dimethyl-8-(1-D-ribityl)lumazine + phosphate + 2 H2O + H(+). Its pathway is cofactor biosynthesis; riboflavin biosynthesis; riboflavin from 2-hydroxy-3-oxobutyl phosphate and 5-amino-6-(D-ribitylamino)uracil: step 1/2. Functionally, catalyzes the formation of 6,7-dimethyl-8-ribityllumazine by condensation of 5-amino-6-(D-ribitylamino)uracil with 3,4-dihydroxy-2-butanone 4-phosphate. This is the penultimate step in the biosynthesis of riboflavin. The polypeptide is 6,7-dimethyl-8-ribityllumazine synthase (Escherichia coli O45:K1 (strain S88 / ExPEC)).